The primary structure comprises 161 residues: UPF0506 protein SJCHGC02965 (161 aa).

An N-terminal signal peptide occupies residues 1-13; that stretch reads QLLILCLVTVINS. Residues N15, N19, N31, N43, N47, N59, N63, N75, and N121 are each glycosylated (N-linked (GlcNAc...) asparagine). 3 disulfides stabilise this stretch: C127-C141, C134-C145, and C140-C150.

This sequence belongs to the UPF0506 family.

It is found in the secreted. In Schistosoma japonicum (Blood fluke), this protein is UPF0506 protein SJCHGC02965.